Reading from the N-terminus, the 551-residue chain is Seed biotin-containing protein SBP65 (551 aa).

Positions 1–20 are enriched in basic and acidic residues; it reads MASEQLSRRENITTERKIQN. Residues 1–29 are disordered; the sequence is MASEQLSRRENITTERKIQNAEDSVPQRT. Residue lysine 103 is modified to N6-biotinyllysine; atypical. The stretch at 141–211 forms a coiled coil; sequence KGQVVEERER…RNTTQAAQEK (71 aa). Disordered stretches follow at residues 197–265 and 518–551; these read TNET…YEAT and DEVEKSMQKNIGSDSHSLDRAKHEGYRAPKNNVS. The segment covering 206-219 has biased composition (low complexity); sequence QAAQEKGEAAQAKD. 2 stretches are compositionally biased toward polar residues: residues 223-242 and 250-265; these read EKTQQGYEMTGDTVSNSART and AKNTTLGKTQQGYEAT. Positions 533-544 are enriched in basic and acidic residues; the sequence is HSLDRAKHEGYR.

Belongs to the seed biotin-containing protein SBP65 family. As to expression, expressed in dry mature seeds.

In terms of biological role, may serve as a biotin source for several growth-limiting enzymes that are necessary during seed development and the subsequent germination stages, and thus may play some roles in determining seed germination capacity. This Pisum sativum (Garden pea) protein is Seed biotin-containing protein SBP65 (SBP65).